A 714-amino-acid chain; its full sequence is Structure-specific endonuclease subunit SLX4 2 (714 aa).

Composition is skewed to basic and acidic residues over residues methionine 1 to leucine 14 and isoleucine 24 to histidine 34. Disordered stretches follow at residues methionine 1–glycine 114 and serine 338–glutamine 369. A compositionally biased stretch (polar residues) spans glutamine 36–serine 46. A compositionally biased stretch (basic residues) spans lysine 79 to lysine 92.

It belongs to the SLX4 family. As to quaternary structure, forms a heterodimer with SLX1. In terms of processing, phosphorylated in response to DNA damage.

The protein localises to the nucleus. Its function is as follows. Regulatory subunit of the SLX1-SLX4 structure-specific endonuclease that resolves DNA secondary structures generated during DNA repair and recombination. Has endonuclease activity towards branched DNA substrates, introducing single-strand cuts in duplex DNA close to junctions with ss-DNA. This chain is Structure-specific endonuclease subunit SLX4 2, found in Candida tropicalis (strain ATCC MYA-3404 / T1) (Yeast).